A 155-amino-acid polypeptide reads, in one-letter code: Deoxyuridine 5'-triphosphate nucleotidohydrolase (155 aa).

Substrate is bound by residues 74–76, Asn-87, and 91–93; these read RSG and LID.

Belongs to the dUTPase family. It depends on Mg(2+) as a cofactor.

It carries out the reaction dUTP + H2O = dUMP + diphosphate + H(+). The protein operates within pyrimidine metabolism; dUMP biosynthesis; dUMP from dCTP (dUTP route): step 2/2. In terms of biological role, this enzyme is involved in nucleotide metabolism: it produces dUMP, the immediate precursor of thymidine nucleotides and it decreases the intracellular concentration of dUTP so that uracil cannot be incorporated into DNA. This chain is Deoxyuridine 5'-triphosphate nucleotidohydrolase, found in Xanthomonas axonopodis pv. citri (strain 306).